The chain runs to 99 residues: Ragulator complex protein LAMTOR4 (99 aa).

An N-acetylmethionine modification is found at methionine 1. An N-acetylthreonine; in Ragulator complex protein LAMTOR4, N-terminally processed modification is found at threonine 2. Serine 67 is subject to Phosphoserine.

This sequence belongs to the LAMTOR4 family. Part of the Ragulator complex composed of LAMTOR1, LAMTOR2, LAMTOR3, LAMTOR4 and LAMTOR5. LAMTOR4 and LAMTOR5 form a heterodimer that interacts, through LAMTOR1, with a LAMTOR2, LAMTOR3 heterodimer. The Ragulator complex interacts with both the mTORC1 complex and heterodimers constituted of the Rag GTPases RagA/RRAGA, RagB/RRAGB, RagC/RRAGC and RagD/RRAGD; regulated by amino acid availability. The Ragulator complex interacts with SLC38A9; the probable amino acid sensor. Component of the lysosomal folliculin complex (LFC), composed of FLCN, FNIP1 (or FNIP2), RagA/RRAGA or RagB/RRAGB GDP-bound, RagC/RRAGC or RagD/RRAGD GTP-bound, and Ragulator. Post-translationally, phosphorylation at Ser-67 by PKA inhibits Ragulator complex assembly.

The protein resides in the lysosome. In terms of biological role, as part of the Ragulator complex it is involved in amino acid sensing and activation of mTORC1, a signaling complex promoting cell growth in response to growth factors, energy levels, and amino acids. Activated by amino acids through a mechanism involving the lysosomal V-ATPase, the Ragulator plays a dual role for the small GTPases Rag (RagA/RRAGA, RagB/RRAGB, RagC/RRAGC and/or RagD/RRAGD): it (1) acts as a guanine nucleotide exchange factor (GEF), activating the small GTPases Rag and (2) mediates recruitment of Rag GTPases to the lysosome membrane. Activated Ragulator and Rag GTPases function as a scaffold recruiting mTORC1 to lysosomes where it is in turn activated. This Bos taurus (Bovine) protein is Ragulator complex protein LAMTOR4 (LAMTOR4).